We begin with the raw amino-acid sequence, 148 residues long: UPF0178 protein DP1304 (148 aa).

Belongs to the UPF0178 family.

This chain is UPF0178 protein DP1304, found in Desulfotalea psychrophila (strain LSv54 / DSM 12343).